The sequence spans 640 residues: Protein cereblon (640 aa).

A compositionally biased stretch (acidic residues) spans 1-11 (MDDEETAEIDE). 2 disordered regions span residues 1 to 25 (MDDE…ELGP) and 92 to 159 (REDP…EAVP). Low complexity predominate over residues 113 to 137 (QPAQQEEQASLPYDSPSRASISSRH). One can recognise a Lon N-terminal domain in the interval 278–506 (RMLIFMHQHI…IIDTTLKQES (229 aa)). Residues 505–614 (ESLFYCRYCN…LAGSSVRIGK (110 aa)) enclose the CULT domain. Zn(2+) is bound by residues Cys-510, Cys-513, Cys-579, and Cys-582.

Belongs to the CRBN family. In terms of assembly, likely a component of a DCX (DDB1-CUL4-X-box) protein ligase complex. May interact with pic/DDB1. Post-translationally, ubiquitinated.

The protein localises to the nucleus. It functions in the pathway protein modification; protein ubiquitination. In terms of biological role, substrate recognition component of a DCX (DDB1-CUL4-X-box) E3 protein ligase complex that mediates the ubiquitination and subsequent proteasomal degradation of target proteins. Has an essential role in mediating growth by negatively regulating insulin signaling. It also has a role in maintaining presynaptic function in the neuromuscular junction synapses of third-instar larvae. This Drosophila virilis (Fruit fly) protein is Protein cereblon.